Consider the following 338-residue polypeptide: Mitoferrin-1 (338 aa).

Residues 1–37 (MELRRGGVGNQAAGRRMDGDCRDGGCGSKDAGSEDYE) form a disordered region. Solcar repeat units lie at residues 43 to 131 (ASVS…MKRT), 141 to 225 (NSHL…LQEQ), and 232 to 326 (YNPQ…FKYI). Helical transmembrane passes span 45–64 (VSTH…SIMY), 106–125 (GLNV…FACY), 143–162 (HLAN…AVMN), 200–219 (SYTT…FITY), 234–253 (PQSH…AATT), and 301–320 (GIQA…WSVY).

The protein belongs to the mitochondrial carrier (TC 2.A.29) family. Interacts with ACB10; this interaction stabilizes SLC25A37 and enhances the function of SLC25A37 to import mitochondrial iron during erythroid differentiation. In terms of tissue distribution, highly expressed in hematopoietic organs, fetal liver, bone marrow and spleen.

Its subcellular location is the mitochondrion inner membrane. It catalyses the reaction Fe(2+)(in) = Fe(2+)(out). Its function is as follows. Mitochondrial iron transporter that specifically mediates iron uptake in developing erythroid cells, thereby playing an essential role in heme biosynthesis. The protein is Mitoferrin-1 (Slc25a37) of Mus musculus (Mouse).